A 255-amino-acid chain; its full sequence is Ribosomal RNA small subunit methyltransferase G 2 (255 aa).

S-adenosyl-L-methionine-binding residues include Gly90, Phe95, and Arg155. Residues 233–245 (EDEGEELLMDELS) are compositionally biased toward acidic residues. Residues 233–255 (EDEGEELLMDELSNEEKRRWAKY) form a disordered region. Over residues 246 to 255 (NEEKRRWAKY) the composition is skewed to basic and acidic residues.

This sequence belongs to the methyltransferase superfamily. RNA methyltransferase RsmG family.

It localises to the cytoplasm. It carries out the reaction guanosine(527) in 16S rRNA + S-adenosyl-L-methionine = N(7)-methylguanosine(527) in 16S rRNA + S-adenosyl-L-homocysteine. In terms of biological role, specifically methylates the N7 position of guanine in position 527 of 16S rRNA. The protein is Ribosomal RNA small subunit methyltransferase G 2 of Bdellovibrio bacteriovorus (strain ATCC 15356 / DSM 50701 / NCIMB 9529 / HD100).